Reading from the N-terminus, the 341-residue chain is Dihydroorotate dehydrogenase (quinone) (341 aa).

Residues 62 to 66 (AGMDK) and T86 each bind FMN. K66 is a substrate binding site. 111-115 (NRMGF) is a binding site for substrate. FMN is bound by residues N139 and N172. N172 is a substrate binding site. The active-site Nucleophile is S175. N177 provides a ligand contact to substrate. FMN-binding residues include K217 and T245. 246-247 (NT) contributes to the substrate binding site. Residues G268, G297, and 318 to 319 (YS) contribute to the FMN site.

Belongs to the dihydroorotate dehydrogenase family. Type 2 subfamily. As to quaternary structure, monomer. The cofactor is FMN.

The protein localises to the cell membrane. It catalyses the reaction (S)-dihydroorotate + a quinone = orotate + a quinol. The protein operates within pyrimidine metabolism; UMP biosynthesis via de novo pathway; orotate from (S)-dihydroorotate (quinone route): step 1/1. Functionally, catalyzes the conversion of dihydroorotate to orotate with quinone as electron acceptor. This Shewanella loihica (strain ATCC BAA-1088 / PV-4) protein is Dihydroorotate dehydrogenase (quinone).